We begin with the raw amino-acid sequence, 350 residues long: Protein OPG097 (350 aa).

Residues 1–10 are compositionally biased toward polar residues; the sequence is MNTRTDVTND. Positions 1 to 61 are disordered; it reads MNTRTDVTND…QPPKQDNKCR (61 aa). The segment covering 11 to 43 has biased composition (basic and acidic residues); it reads NIDKNPTKRGDRNIPGRNERFNDQNRFNNDRPR.

This sequence belongs to the orthopoxvirus OPG097 family.

Its subcellular location is the virion. It is found in the host cytoplasm. Might be required to be present in the virion for transcription of early genes after primo infection. This Homo sapiens (Human) protein is Protein OPG097 (OPG097).